Reading from the N-terminus, the 107-residue chain is Small integral membrane protein 19 (107 aa).

Residues 25-43 form a helical membrane-spanning segment; the sequence is ATNVYLIVILVSFGLFMYA.

It belongs to the SMIM19 family.

The protein resides in the membrane. This is Small integral membrane protein 19 (SMIM19) from Homo sapiens (Human).